A 71-amino-acid polypeptide reads, in one-letter code: Exodeoxyribonuclease 7 small subunit (71 aa).

Belongs to the XseB family. Heterooligomer composed of large and small subunits.

Its subcellular location is the cytoplasm. It catalyses the reaction Exonucleolytic cleavage in either 5'- to 3'- or 3'- to 5'-direction to yield nucleoside 5'-phosphates.. Bidirectionally degrades single-stranded DNA into large acid-insoluble oligonucleotides, which are then degraded further into small acid-soluble oligonucleotides. The chain is Exodeoxyribonuclease 7 small subunit from Streptococcus agalactiae serotype Ia (strain ATCC 27591 / A909 / CDC SS700).